A 397-amino-acid chain; its full sequence is Tetratricopeptide repeat protein 4 homolog (397 aa).

TPR repeat units lie at residues 90–125, 130–163, and 164–197; these read AETF…KCND, SIYL…NPLN, and MKAY…EPTN.

It belongs to the TTC4 family.

In Dictyostelium discoideum (Social amoeba), this protein is Tetratricopeptide repeat protein 4 homolog (ttc4).